Reading from the N-terminus, the 36-residue chain is Photosystem I reaction center subunit VIII (36 aa).

A helical transmembrane segment spans residues 6-26 (LPSIFVPLVGLVFPAIAMASL).

Belongs to the PsaI family.

The protein localises to the plastid. It is found in the chloroplast thylakoid membrane. Functionally, may help in the organization of the PsaL subunit. This Liriodendron tulipifera (Tuliptree) protein is Photosystem I reaction center subunit VIII.